The chain runs to 900 residues: Serine-rich coiled-coil domain-containing protein 1 (900 aa).

Disordered stretches follow at residues 1–100 (MGDS…HSNM) and 156–178 (KSEGDDSGFTEDQTRRSVKQSTR). Low complexity predominate over residues 29–56 (LPSSPSSSNTVGVHSSSPSSTNSSSGST). Over residues 81–100 (EPTNQNLSISNGAQPGHSNM) the composition is skewed to polar residues. Residues 673–707 (MKDECSMLKLQLKEKDELISQLQEELGKVRHLQKA) adopt a coiled-coil conformation.

This sequence belongs to the CCSER family.

The protein is Serine-rich coiled-coil domain-containing protein 1 (CCSER1) of Homo sapiens (Human).